The sequence spans 401 residues: Sodium/glutamate symporter (401 aa).

The Periplasmic portion of the chain corresponds to 1-6 (MFHLDT). Residues 7–24 (LATLVAATLTLLLGRKLV) traverse the membrane as a helical segment. Residues 25–32 (HSVSFLKK) are Cytoplasmic-facing. A helical transmembrane segment spans residues 33–52 (YTIPEPVAGGLLVALALLVL). Residues 53 to 69 (KKSMGWEVNFDMSLRDP) lie on the Periplasmic side of the membrane. Residues 70–87 (LMLAFFATIGLNANIASL) traverse the membrane as a helical segment. The Cytoplasmic segment spans residues 88-93 (RAGGRV). A helical membrane pass occupies residues 94 to 116 (VGIFLIVVVGLLVMQNAIGIGMA). The Periplasmic portion of the chain corresponds to 117–156 (SLLGLDPLMGLLAGSITLSGGHGTGAAWSKLFIERYGFTN). Residues 157 to 179 (ATEVAMACATFGLVLGGLIGGPV) form a helical membrane-spanning segment. At 180–212 (ARYLVKHSTTPNGIPDDQEVPTAFEKPDVGRMI) the chain is on the cytoplasmic side. The chain crosses the membrane as a helical span at residues 213–235 (TSLVLIETIALIAICLTVGKIVA). Topologically, residues 236–244 (QLLAGTAFE) are periplasmic. A helical membrane pass occupies residues 245 to 267 (LPTFVCVLFVGVILSNGLSIMGF). Over 268 to 276 (YRVFERAVS) the chain is Cytoplasmic. Residues 277 to 292 (VLGNVSLSLFLAMALM) traverse the membrane as a helical segment. Residues 293-301 (GLKLWELAS) are Periplasmic-facing. The helical transmembrane segment at 302–324 (LALPMLAILVVQTIFMALYAIFV) threads the bilayer. At 325–367 (TWRMMGKNYDAAVLAAGHCGFGLGATPTAIANMQAITERFGPS) the chain is on the cytoplasmic side. Residues 368 to 390 (HMAFLVVPMVGAFFIDIVNALVI) traverse the membrane as a helical segment. Residues 391 to 401 (KLYLMLPIFAG) are Periplasmic-facing.

The protein belongs to the glutamate:Na(+) symporter (ESS) (TC 2.A.27) family.

The protein localises to the cell inner membrane. Inhibited by the uncoupler carbonylcyanide m-chlorophenylhydrazone (CCCP) and the ionophore monensin. Functionally, catalyzes the sodium-dependent, binding-protein-independent transport of glutamate. This Escherichia coli (strain K12) protein is Sodium/glutamate symporter.